The primary structure comprises 51 residues: Large ribosomal subunit protein eL39 (51 aa).

The disordered stretch occupies residues 1–23 (MSALKKSFIKRKLAKKQKQNRPM). A compositionally biased stretch (basic residues) spans 7–19 (SFIKRKLAKKQKQ).

It belongs to the eukaryotic ribosomal protein eL39 family. Interacts with impact.

This Caenorhabditis elegans protein is Large ribosomal subunit protein eL39 (rpl-39).